Here is an 834-residue protein sequence, read N- to C-terminus: Mannosyl-oligosaccharide glucosidase (834 aa).

Positions 1 to 10 (MARGERRRRA) are enriched in basic residues. A disordered region spans residues 1–37 (MARGERRRRAAAAEGARPLERARAAGRRDGRAGGARG). The Cytoplasmic portion of the chain corresponds to 1–43 (MARGERRRRAAAAEGARPLERARAAGRRDGRAGGARGSASGAA). Residues 3–9 (RGERRRR) carry the Endoplasmic reticulum targeting motif. Residues 17–31 (RPLERARAAGRRDGR) are compositionally biased toward basic and acidic residues. Residues 44–64 (LAVVVLALAFGLSGRWVLAWL) traverse the membrane as a helical; Signal-anchor for type II membrane protein segment. The Lumenal segment spans residues 65 to 834 (RVRRALTLHP…LVLLIMAEEY (770 aa)). The tract at residues 74-136 (PAPSALPPDS…GTPPKLRHTC (63 aa)) is required for endoplasmic reticulum targeting. Catalysis depends on D580, which acts as the Proton donor. N-linked (GlcNAc...) asparagine glycosylation occurs at N654. The Proton acceptor role is filled by E804.

This sequence belongs to the glycosyl hydrolase 63 family.

Its subcellular location is the endoplasmic reticulum membrane. It catalyses the reaction N(4)-(alpha-D-Glc-(1-&gt;2)-alpha-D-Glc-(1-&gt;3)-alpha-D-Glc-(1-&gt;3)-alpha-D-Man-(1-&gt;2)-alpha-D-Man-(1-&gt;2)-alpha-D-Man-(1-&gt;3)-[alpha-D-Man-(1-&gt;2)-alpha-D-Man-(1-&gt;3)-[alpha-D-Man-(1-&gt;2)-alpha-D-Man-(1-&gt;6)]-alpha-D-Man-(1-&gt;6)]-beta-D-Man-(1-&gt;4)-beta-D-GlcNAc-(1-&gt;4)-beta-D-GlcNAc)-L-asparaginyl-[protein] + H2O = N(4)-(alpha-D-Glc-(1-&gt;3)-alpha-D-Glc-(1-&gt;3)-alpha-D-Man-(1-&gt;2)-alpha-D-Man-(1-&gt;2)-alpha-D-Man-(1-&gt;3)-[alpha-D-Man-(1-&gt;2)-alpha-D-Man-(1-&gt;3)-[alpha-D-Man-(1-&gt;2)-alpha-D-Man-(1-&gt;6)]-alpha-D-Man-(1-&gt;6)]-beta-D-Man-(1-&gt;4)-beta-D-GlcNAc-(1-&gt;4)-beta-D-GlcNAc)-L-asparaginyl-[protein] + beta-D-glucose. It participates in glycan metabolism; N-glycan degradation. With respect to regulation, inhibited by the deoxynojirimycin derivative N-9'-Methoxynonyl-1-Deoxynojirimycin. In the context of N-glycan degradation, cleaves the distal alpha 1,2-linked glucose residue from the Glc(3)Man(9)GlcNAc(2) oligosaccharide precursor in a highly specific manner. Its function is as follows. (Microbial infection) Required for successful influenza or dengue virus infection; inhibition of its activity by a deoxynojirimycin derivative prevents death in mice infected with lethal doses of influenza or dengue viruses, even when administrated after infection. This Mus musculus (Mouse) protein is Mannosyl-oligosaccharide glucosidase.